The following is a 359-amino-acid chain: DNA polymerase IV (359 aa).

Residues 6-186 form the UmuC domain; that stretch reads IIHVDMDAFY…LPIEAFWGVG (181 aa). 2 residues coordinate Mg(2+): aspartate 10 and aspartate 104. Residue glutamate 105 is part of the active site.

This sequence belongs to the DNA polymerase type-Y family. In terms of assembly, monomer. The cofactor is Mg(2+).

It is found in the cytoplasm. It carries out the reaction DNA(n) + a 2'-deoxyribonucleoside 5'-triphosphate = DNA(n+1) + diphosphate. Its function is as follows. Poorly processive, error-prone DNA polymerase involved in untargeted mutagenesis. Copies undamaged DNA at stalled replication forks, which arise in vivo from mismatched or misaligned primer ends. These misaligned primers can be extended by PolIV. Exhibits no 3'-5' exonuclease (proofreading) activity. May be involved in translesional synthesis, in conjunction with the beta clamp from PolIII. This is DNA polymerase IV from Akkermansia muciniphila (strain ATCC BAA-835 / DSM 22959 / JCM 33894 / BCRC 81048 / CCUG 64013 / CIP 107961 / Muc).